We begin with the raw amino-acid sequence, 54 residues long: Beta-2-microglobulin (54 aa).

An Ig-like C1-type domain is found at 3–41 (KVELSDLSFNKDWSFYLLAHREFVPTATDKYACRVSHIT).

The protein belongs to the beta-2-microglobulin family. Heterodimer of an alpha chain and a beta chain. Beta-2-microglobulin is the beta-chain of major histocompatibility complex class I molecules.

The protein localises to the secreted. Its function is as follows. Component of the class I major histocompatibility complex (MHC). Involved in the presentation of peptide antigens to the immune system. The polypeptide is Beta-2-microglobulin (B2M) (Mesocricetus auratus (Golden hamster)).